Consider the following 219-residue polypeptide: Biofilm-associated metzincin protease inhibitor (219 aa).

A helical membrane pass occupies residues 4-24 (TWIYAASAAAIGGALIGGWLL). A compositionally biased stretch (basic and acidic residues) spans 191–204 (DIAARSDPHGDHVD). The tract at residues 191 to 219 (DIAARSDPHGDHVDAPLAELPPMPPPAQG) is disordered. Residues 209–219 (ELPPMPPPAQG) are compositionally biased toward pro residues.

The protein localises to the cell membrane. Functionally, inhibitor of the metalloendopeptidase Mep72. Forms a protein-protein complex with the protease, which is the product of its coregulated adjacent gene, and probably prevents premature protease activity until the protein has been secreted. This is Biofilm-associated metzincin protease inhibitor from Pseudomonas aeruginosa (strain ATCC 15692 / DSM 22644 / CIP 104116 / JCM 14847 / LMG 12228 / 1C / PRS 101 / PAO1).